A 247-amino-acid polypeptide reads, in one-letter code: Ribonuclease PH (247 aa).

Phosphate contacts are provided by residues Arg-96 and 134-136 (GTR).

Belongs to the RNase PH family. Homohexameric ring arranged as a trimer of dimers.

It catalyses the reaction tRNA(n+1) + phosphate = tRNA(n) + a ribonucleoside 5'-diphosphate. In terms of biological role, phosphorolytic 3'-5' exoribonuclease that plays an important role in tRNA 3'-end maturation. Removes nucleotide residues following the 3'-CCA terminus of tRNAs; can also add nucleotides to the ends of RNA molecules by using nucleoside diphosphates as substrates, but this may not be physiologically important. Probably plays a role in initiation of 16S rRNA degradation (leading to ribosome degradation) during starvation. The chain is Ribonuclease PH from Tropheryma whipplei (strain TW08/27) (Whipple's bacillus).